An 817-amino-acid chain; its full sequence is LPS-assembly protein LptD (817 aa).

The N-terminal stretch at 1–26 (MPALVVSPDLVRGAAGASAAPTPAPA) is a signal peptide. The tract at residues 1-101 (MPALVVSPDL…ARKPGSTEVR (101 aa)) is disordered. The segment covering 13-90 (GAAGASAAPT…PAASASPADA (78 aa)) has biased composition (low complexity).

It belongs to the LptD family. In terms of assembly, component of the lipopolysaccharide transport and assembly complex. Interacts with LptE and LptA.

It localises to the cell outer membrane. Its function is as follows. Together with LptE, is involved in the assembly of lipopolysaccharide (LPS) at the surface of the outer membrane. The polypeptide is LPS-assembly protein LptD (Azoarcus sp. (strain BH72)).